A 370-amino-acid chain; its full sequence is MSGAPPAPRGGGHRWYGVARQLFFLVPAERIHTLVFALLRGVTAVGWPRRLLRRLLAPTDPVLASTVFGVRFPGPLGLAAGFDKDGLGLHAWGALGFGYAEIGTVTAGPQPGNPAPRLFRLPADRALLNRMGFNNLGAGALAVRLARRQPDIPIGVNIGKTKATPPDQAVDDYRASARLLGPLASYLVVNVSSPNTPGLRDLQAVGSLRPILSAVLAETSTPVLVKIAPDLSDSDVDDIADLAVELGLAGIVATNTTVSRDGLRTAGVDQLGAGGISGPPVARRAVEVLRRLYGRVGDRLVLISVGGIETADHAWERITAGASLLQGYTGFVYGGGLWAKQIHDGIAQRLRDGGFASLRDAVGSSARESG.

FMN-binding positions include A80 to K84 and T104. Residue K84 coordinates substrate. N129–F133 provides a ligand contact to substrate. 2 residues coordinate FMN: N157 and N190. Residue N190 participates in substrate binding. S193 functions as the Nucleophile in the catalytic mechanism. N195 contacts substrate. Residues K226 and T254 each contribute to the FMN site. N255–T256 is a binding site for substrate. Residues G278, G307, and Y328–T329 contribute to the FMN site.

It belongs to the dihydroorotate dehydrogenase family. Type 2 subfamily. As to quaternary structure, monomer. FMN is required as a cofactor.

The protein localises to the cell membrane. The enzyme catalyses (S)-dihydroorotate + a quinone = orotate + a quinol. It functions in the pathway pyrimidine metabolism; UMP biosynthesis via de novo pathway; orotate from (S)-dihydroorotate (quinone route): step 1/1. Functionally, catalyzes the conversion of dihydroorotate to orotate with quinone as electron acceptor. This chain is Dihydroorotate dehydrogenase (quinone), found in Mycolicibacterium paratuberculosis (strain ATCC BAA-968 / K-10) (Mycobacterium paratuberculosis).